The sequence spans 94 residues: Co-chaperonin GroES (94 aa).

Heptamer of 7 subunits arranged in a ring. Interacts with the chaperonin GroEL.

It localises to the cytoplasm. In terms of biological role, together with the chaperonin GroEL, plays an essential role in assisting protein folding. The GroEL-GroES system forms a nano-cage that allows encapsulation of the non-native substrate proteins and provides a physical environment optimized to promote and accelerate protein folding. GroES binds to the apical surface of the GroEL ring, thereby capping the opening of the GroEL channel. The protein is Co-chaperonin GroES of Thermoanaerobacter brockii (Thermoanaerobium brockii).